The sequence spans 179 residues: Large ribosomal subunit protein uL6 (179 aa).

It belongs to the universal ribosomal protein uL6 family. Part of the 50S ribosomal subunit.

In terms of biological role, this protein binds to the 23S rRNA, and is important in its secondary structure. It is located near the subunit interface in the base of the L7/L12 stalk, and near the tRNA binding site of the peptidyltransferase center. In Buchnera aphidicola subsp. Baizongia pistaciae (strain Bp), this protein is Large ribosomal subunit protein uL6.